The chain runs to 636 residues: Putative lipase ATG15 (636 aa).

The Cytoplasmic segment spans residues M1–R19. The helical; Signal-anchor for type II membrane protein transmembrane segment at L20–F42 threads the bilayer. Residues S43 to M636 are Lumenal-facing. N-linked (GlcNAc...) asparagine glycosylation is found at N211, N233, N291, N315, and N477. Positions G478–S500 are disordered. Residues T479–S500 show a composition bias toward low complexity.

Belongs to the AB hydrolase superfamily. Lipase family. In terms of assembly, binds to both phosphatidylinositol (PI) and phosphatidylinositol 3,5-bisphosphate (PIP2).

Its subcellular location is the endosome. It localises to the multivesicular body membrane. The protein localises to the prevacuolar compartment membrane. The enzyme catalyses a triacylglycerol + H2O = a diacylglycerol + a fatty acid + H(+). In terms of biological role, lipase which is essential for lysis of subvacuolar cytoplasm to vacuole targeted bodies and intravacuolar autophagic bodies. Involved in the lysis of intravacuolar multivesicular body (MVB) vesicles. The intravacuolar membrane disintegration by ATG15 is critical to life span extension. Autophagy is required for proper vegetative growth, asexual/sexual reproduction, and full virulence. Autophagy is particularly involved in the biosynthesis of deoxynivalenol (DON), an important virulence determinant. In Gibberella zeae (strain ATCC MYA-4620 / CBS 123657 / FGSC 9075 / NRRL 31084 / PH-1) (Wheat head blight fungus), this protein is Putative lipase ATG15.